The sequence spans 927 residues: Echinoderm microtubule-associated protein-like 4 (927 aa).

Residues 1–189 (MDGFAGSLDD…IPSDVENYDD (189 aa)) form a microtubule-binding region. A coiled-coil region spans residues 14–63 (AASTSDVQDRLSALELRVQQQEDEITVLKAALADVLRRLAISEDQVATVR). The segment at 85 to 132 (NGGAGTRKPSHASSVAKKDTLSSAAKSVKRSSTLEKSHNSWDASEESR) is disordered. Positions 116–132 (STLEKSHNSWDASEESR) are enriched in basic and acidic residues. WD repeat units lie at residues 199–237 (LKLE…LFNY), 241–288 (TQRH…VWDS), 296–336 (VIGL…VWDW), 343–378 (AEIK…FWTW), 385–424 (RKQG…IWSK), 442–480 (QISK…MWDH), 485–521 (EREI…LRGT), 524–563 (DGFQ…LWNS), 567–604 (SLEW…VLDA), 610–646 (VSIH…LYNV), 653–692 (YSRY…YWDI), 702–760 (RSEC…LFQY), and 767–806 (APSH…QWRL). Residues 815 to 829 (NDNIAESSSAVNSPV) are compositionally biased toward polar residues. The tract at residues 815-927 (NDNIAESSSA…NQDDDDAPLS (113 aa)) is disordered. The segment covering 914-927 (AQDENQDDDDAPLS) has biased composition (acidic residues).

The protein belongs to the WD repeat EMAP family. As to quaternary structure, homotrimer; self-association is mediated by the N-terminal coiled coil.

The protein resides in the cytoplasm. The protein localises to the cytoskeleton. It is found in the spindle. Its subcellular location is the microtubule organizing center. It localises to the midbody. In terms of biological role, essential for the formation and stability of microtubules (MTs). Required for the organization of the mitotic spindle and for the proper attachment of kinetochores to MTs. Promotes the recruitment of NUDC to the mitotic spindle for mitotic progression. In Xenopus laevis (African clawed frog), this protein is Echinoderm microtubule-associated protein-like 4 (eml4).